The following is a 388-amino-acid chain: Cell adhesion molecule 4 (388 aa).

An N-terminal signal peptide occupies residues 1-20 (MGRARRFQWPLLLLWAAAAG). One can recognise an Ig-like V-type domain in the interval 21-119 (PGTGQEVQTE…DTHHQIATLT (99 aa)). At 25–324 (QEVQTENVTV…VEAQTSVPYA (300 aa)) the chain is on the extracellular side. Asn-31 and Asn-67 each carry an N-linked (GlcNAc...) asparagine glycan. Disulfide bonds link Cys-44-Cys-104, Cys-145-Cys-199, and Cys-245-Cys-291. Ig-like C2-type domains are found at residues 124-219 (PENP…YVLD) and 224-307 (PTAR…YVLV). Residue Asn-286 is glycosylated (N-linked (GlcNAc...) asparagine). A helical transmembrane segment spans residues 325-345 (IVGGILALLVFLIICVLVGMV). The Cytoplasmic segment spans residues 346–388 (WCSVRQKGSYLTHEASGLDEQGEAREAFLNGGDGHKRKEEFFI). Ser-361 carries the phosphoserine modification.

This sequence belongs to the nectin family. Monomer and homodimer. In terms of processing, N-glycosylated. In terms of tissue distribution, expressed in the brain and several organs including the kidney and liver.

Its subcellular location is the membrane. Functionally, involved in the cell-cell adhesion. Has calcium- and magnesium-independent cell-cell adhesion activity. May have tumor-suppressor activity. This chain is Cell adhesion molecule 4 (Cadm4), found in Mus musculus (Mouse).